We begin with the raw amino-acid sequence, 201 residues long: Glycerol-3-phosphate acyltransferase (201 aa).

Transmembrane regions (helical) follow at residues 10 to 30 (ALIL…GIVI), 59 to 79 (PAAL…VLIA), 87 to 107 (AAQL…WLGF), 116 to 136 (FLGT…LTWL), and 161 to 181 (ILLG…LIFI).

This sequence belongs to the PlsY family. As to quaternary structure, probably interacts with PlsX.

It localises to the cell inner membrane. It carries out the reaction an acyl phosphate + sn-glycerol 3-phosphate = a 1-acyl-sn-glycero-3-phosphate + phosphate. It participates in lipid metabolism; phospholipid metabolism. Catalyzes the transfer of an acyl group from acyl-phosphate (acyl-PO(4)) to glycerol-3-phosphate (G3P) to form lysophosphatidic acid (LPA). This enzyme utilizes acyl-phosphate as fatty acyl donor, but not acyl-CoA or acyl-ACP. In Cereibacter sphaeroides (strain ATCC 17029 / ATH 2.4.9) (Rhodobacter sphaeroides), this protein is Glycerol-3-phosphate acyltransferase.